Consider the following 359-residue polypeptide: Peptide chain release factor 1 (359 aa).

An N5-methylglutamine modification is found at Gln-236.

Belongs to the prokaryotic/mitochondrial release factor family. Post-translationally, methylated by PrmC. Methylation increases the termination efficiency of RF1.

The protein localises to the cytoplasm. Its function is as follows. Peptide chain release factor 1 directs the termination of translation in response to the peptide chain termination codons UAG and UAA. The protein is Peptide chain release factor 1 of Streptococcus pyogenes serotype M1.